A 443-amino-acid chain; its full sequence is Flavastacin (443 aa).

Residues 1 to 15 form the signal peptide; the sequence is MTRKLLILSGCLILA. Residues 16-91 constitute a propeptide, activation peptide; sequence LNSCKSDMET…ANPDISTVER (76 aa). Residues 92–289 form the Peptidase M12A domain; sequence STIVSSFIKT…AGINHLYGPV (198 aa). Position 189 (H189) interacts with Zn(2+). The active site involves E190. Residues H193 and H199 each contribute to the Zn(2+) site. A Ricin B-type lectin domain is found at 297 to 440; that stretch reads GTYTLTTSLA…PYTKQRFTLT (144 aa). O-linked (Man...) serine glycosylation occurs at S355.

Zn(2+) serves as cofactor. In terms of processing, O-linked glycan consists of the Man, GlcNAc, GlcU, Glc, GlcU, Rha, Man heptasaccharide.

It carries out the reaction Hydrolyzes polypeptides on the amino-side of Asp in -Xaa-|-Asp-. Acts very slowly on -Xaa-|-Glu.. In terms of biological role, zinc metallendopeptidase that cleaves preferentially on N-terminal side of aspartate-containing substrates. The sequence is that of Flavastacin from Elizabethkingia meningoseptica (Chryseobacterium meningosepticum).